The chain runs to 180 residues: Chromatin structure-remodeling complex protein RSC14 (180 aa).

As to quaternary structure, interacts with STH1, RSC3 and ARP9. Component of the two forms of the RSC complex composed of at least either RSC1 or RSC2, and ARP7, ARP9, LDB7, NPL6, RSC3, RSC30, RSC4, RSC58, RSC6, RSC8, RSC9, SFH1, STH1, HTL1 and probably RTT102. The complexes interact with histone and histone variant components of centromeric chromatin. Component of a fungal-specific module (HTL1-LDB7-NPL6-RSC3-RSC30) within the RSC complex.

The protein localises to the nucleus. In terms of biological role, component of the chromatin structure-remodeling complex (RSC), which is involved in transcription regulation and nucleosome positioning. RSC is responsible for the transfer of a histone octamer from a nucleosome core particle to naked DNA. The reaction requires ATP and involves an activated RSC-nucleosome intermediate. Remodeling reaction also involves DNA translocation, DNA twist and conformational change. As a reconfigurer of centromeric and flanking nucleosomes, RSC complex is required both for proper kinetochore function in chromosome segregation and, via a PKC1-dependent signaling pathway, for organization of the cellular cytoskeleton. Together with HTL1, NPL6, RSC3, RSC30 components, defines a fungal-specific module within the RSC complex that plays a role in many cellular functions including the maintenance of cell wall integrity. May be involved in the transfer of mannosylphosphate (MP) groups into N-linked oligosaccharides. This Saccharomyces cerevisiae (strain ATCC 204508 / S288c) (Baker's yeast) protein is Chromatin structure-remodeling complex protein RSC14 (LDB7).